The following is a 251-amino-acid chain: Ribosome maturation factor RimP (251 aa).

The segment at 176–251 (SLRRGSAPPQ…ARLKNRDTLH (76 aa)) is disordered. Residues 186–196 (DGEEGDEEEGA) show a composition bias toward acidic residues. Positions 216 to 226 (PKLDKKSDKPV) are enriched in basic and acidic residues.

Belongs to the RimP family.

The protein localises to the cytoplasm. Required for maturation of 30S ribosomal subunits. The sequence is that of Ribosome maturation factor RimP from Methylorubrum extorquens (strain PA1) (Methylobacterium extorquens).